We begin with the raw amino-acid sequence, 213 residues long: Ribosomal RNA small subunit methyltransferase G (213 aa).

Residues Gly-77, Phe-82, 130–131 (IE), and Arg-146 each bind S-adenosyl-L-methionine.

This sequence belongs to the methyltransferase superfamily. RNA methyltransferase RsmG family.

It localises to the cytoplasm. It carries out the reaction guanosine(527) in 16S rRNA + S-adenosyl-L-methionine = N(7)-methylguanosine(527) in 16S rRNA + S-adenosyl-L-homocysteine. In terms of biological role, specifically methylates the N7 position of guanine in position 527 of 16S rRNA. In Bartonella tribocorum (strain CIP 105476 / IBS 506), this protein is Ribosomal RNA small subunit methyltransferase G.